A 172-amino-acid chain; its full sequence is MAFYLSFLMAALVGGMIAIASNPAPYFAAFGLVVVAGVGCGILVSYGGSFLSLILFLIYLGGMLVVFAYSAALAAEPFPEAWGDRVVFWRVMVYGLVVIVAAGFLLTGDTGLLMSVDAFKEFSVIRADVSGVAMMYSSGGKMLVICAWVLLLTLFVVLEVTRGLSYGVLRAI.

Helical transmembrane passes span 1–21, 24–44, 53–73, 86–106, and 140–160; these read MAFYLSFLMAALVGGMIAIAS, APYFAAFGLVVVAGVGCGILV, LILFLIYLGGMLVVFAYSAAL, VVFWRVMVYGLVVIVAAGFLL, and GKMLVICAWVLLLTLFVVLEV.

The protein belongs to the complex I subunit 6 family. In terms of assembly, core subunit of respiratory chain NADH dehydrogenase (Complex I) which is composed of 45 different subunits.

The protein resides in the mitochondrion inner membrane. The catalysed reaction is a ubiquinone + NADH + 5 H(+)(in) = a ubiquinol + NAD(+) + 4 H(+)(out). Core subunit of the mitochondrial membrane respiratory chain NADH dehydrogenase (Complex I) which catalyzes electron transfer from NADH through the respiratory chain, using ubiquinone as an electron acceptor. Essential for the catalytic activity and assembly of complex I. The chain is NADH-ubiquinone oxidoreductase chain 6 (mt-nd6) from Danio rerio (Zebrafish).